A 131-amino-acid chain; its full sequence is Small ribosomal subunit protein uS19 (131 aa).

Belongs to the universal ribosomal protein uS19 family.

In terms of biological role, protein S19 forms a complex with S13 that binds strongly to the 16S ribosomal RNA. The protein is Small ribosomal subunit protein uS19 of Nitrosopumilus maritimus (strain SCM1).